A 423-amino-acid polypeptide reads, in one-letter code: MGILLIGMSHKTSPLAVRERFSLSCENRDHPLDRIRQMPSIREALYLATCNRVEVLVSAAEEAEQAVEEGLKALMAERGGISGQELERCLYTLSGAEAVRHLFRVASSLDSLVMGEPQILGQVKEAYREAVEHGVTGILLNRILHHAFQVAKRVRTETGIADNAVSVGYAAVELAKKIFGRLDGKVILLVGAGEMSELAARHLLKQGIKSIFVANRTHARALEMAEQFEGKAVVLEQVPEVLKSVDIVISSTGASNYVLTRDMVAAALRRRKNRFLFLIDIAVPRDIEPAAGDIDNVYLYNIDHLQELVDENRNHRLREAEKAEAIIEEEVGNHTAWLSTLDVVPTIVEFREKIEGIMKAELGKSASWRHSLSEIDQRHVESLMASIVNKILHEPTACLREQSRNRNGKAYAAALRKLFKLER.

Substrate-binding positions include 49 to 52, S111, 116 to 118, and Q122; these read TCNR and EPQ. C50 functions as the Nucleophile in the catalytic mechanism. Residue 191 to 196 participates in NADP(+) binding; it reads GAGEMS.

The protein belongs to the glutamyl-tRNA reductase family. As to quaternary structure, homodimer.

The enzyme catalyses (S)-4-amino-5-oxopentanoate + tRNA(Glu) + NADP(+) = L-glutamyl-tRNA(Glu) + NADPH + H(+). The protein operates within porphyrin-containing compound metabolism; protoporphyrin-IX biosynthesis; 5-aminolevulinate from L-glutamyl-tRNA(Glu): step 1/2. In terms of biological role, catalyzes the NADPH-dependent reduction of glutamyl-tRNA(Glu) to glutamate 1-semialdehyde (GSA). The chain is Glutamyl-tRNA reductase from Syntrophus aciditrophicus (strain SB).